The primary structure comprises 278 residues: MSVFDLFRGFFGFPGPRSHRDPFFGGMTRDDDDDEDDEEEEDSGAWGRESYAFDGFHPTEEFGFSFSPRGGMRFHGNFGFDDLVRDFNSIFSEMGAWTLPSHSPELPGPESETPGVRLREGQTLRDSMLKYPDSHQPRIFEGVLESHAKPESSKPAPDWGSQGPFHRLDDTWPVSPHSRAREDKDLDSQVSQEGLGPLLQPQPKSYFKSISVTKITKPDGTVEEHRTVVDSEGRRETTVTHQEAHDSSRSDPDPPRSSALDDPFSILDLLLGRWFRSR.

Ser2 is modified (N-acetylserine). A required for localization in mitochondria region spans residues 2–43 (SVFDLFRGFFGFPGPRSHRDPFFGGMTRDDDDDEDDEEEEDS). Disordered regions lie at residues 15–50 (GPRS…GRES) and 99–262 (LPSH…ALDD). The segment covering 30-43 (DDDDDEDDEEEEDS) has biased composition (acidic residues). The involved in HCLS1 binding stretch occupies residues 113–278 (TPGVRLREGQ…LLLGRWFRSR (166 aa)). A compositionally biased stretch (basic and acidic residues) spans 132-152 (PDSHQPRIFEGVLESHAKPES). Positions 174–205 (VSPHSRAREDKDLDSQVSQEGLGPLLQPQPKS) are involved in CASP9 binding. The segment at 175 to 246 (SPHSRAREDK…TTVTHQEAHD (72 aa)) is involved in GNA13 binding. The interval 182–278 (EDKDLDSQVS…LLLGRWFRSR (97 aa)) is required for localization in sarcoplasmic reticulum. An involved in PKD2 binding region spans residues 183–278 (DKDLDSQVSQ…LLLGRWFRSR (96 aa)). Ser188 and Ser191 each carry phosphoserine. Residues 202–224 (QPKSYFKSISVTKITKPDGTVEE) form an involved in PLN binding region. The involved in ATP2A2 binding stretch occupies residues 202 to 244 (QPKSYFKSISVTKITKPDGTVEEHRTVVDSEGRRETTVTHQEA). A mediates interaction with UCP3 region spans residues 209 to 278 (SISVTKITKP…LLLGRWFRSR (70 aa)). A compositionally biased stretch (basic and acidic residues) spans 216–254 (TKPDGTVEEHRTVVDSEGRRETTVTHQEAHDSSRSDPDP). The interval 269–278 (LLLGRWFRSR) is required for ITGB6 binding.

Belongs to the HAX1 family. As to quaternary structure, interacts with ABCB1, ABCB4 and ABCB11. Directly associates with HCLS1/HS1, through binding to its N-terminal region. Interacts with CTTN. Interacts with PKD2. Interacts with GNA13. Interacts with CASP9. Interacts with ITGB6. Interacts with PLN and ATP2A2; these interactions are inhibited by calcium. Interacts with GRB7. Interacts (via C-terminus) with XIAP/BIRC4 (via BIR 2 domain and BIR 3 domain) and this interaction blocks ubiquitination of XIAP/BIRC4. Interacts with TPC2. Interacts with KCNC3. Interacts with XPO1. Interacts with RNF217. Interacts with UCP3; the interaction is direct and calcium-dependent. Interacts with MAPRE2; this interaction regulates cell migration in keratinocytes. As to expression, present in striated muscles (at protein level).

It is found in the mitochondrion matrix. Its subcellular location is the endoplasmic reticulum. The protein localises to the nucleus membrane. It localises to the cytoplasmic vesicle. The protein resides in the cytoplasm. It is found in the cell cortex. Its subcellular location is the cell membrane. The protein localises to the sarcoplasmic reticulum. It localises to the P-body. The protein resides in the nucleus. In terms of biological role, recruits the Arp2/3 complex to the cell cortex and regulates reorganization of the cortical actin cytoskeleton via its interaction with KCNC3 and the Arp2/3 complex. Slows down the rate of inactivation of KCNC3 channels. Promotes GNA13-mediated cell migration. Involved in the clathrin-mediated endocytosis pathway. May be involved in internalization of ABC transporters such as ABCB11. May inhibit CASP9 and CASP3. Promotes cell survival. May regulate intracellular calcium pools. This Rattus norvegicus (Rat) protein is HCLS1-associated protein X-1 (Hax1).